Reading from the N-terminus, the 533-residue chain is Beta-1,2-xylosyltransferase RCN11 (533 aa).

Topologically, residues Met1 to Arg23 are cytoplasmic. The helical; Signal-anchor for type II membrane protein transmembrane segment at Ile24–Leu44 threads the bilayer. Residues Leu45–Cys533 lie on the Lumenal side of the membrane. Positions His51–Asp78 are disordered. Residues Pro56–Val65 are compositionally biased toward basic and acidic residues. N-linked (GlcNAc...) asparagine glycosylation is found at Asn307 and Asn313.

Belongs to the glycosyltransferase 61 family. As to expression, expressed at the base of the crown roots and in the basal region of the shoot, which contains the shoot and axillary meristems.

It is found in the golgi apparatus membrane. It participates in glycan metabolism. Functionally, glycosyltransferase involved in the xylosylation of N-glycans. Possesses beta-1,2-xylosyltransferase activity, transferring xylose from UDP-xylose to the core beta-linked mannose of N-glycans. Beta-1,2-linked xylose residues on N-glycans are critical for seed germination and plant development and growth under conditions of abiotic stress. The chain is Beta-1,2-xylosyltransferase RCN11 from Oryza sativa subsp. japonica (Rice).